A 342-amino-acid polypeptide reads, in one-letter code: MATH domain and coiled-coil domain-containing protein At3g44800 (342 aa).

Residues 3 to 129 form the MATH domain; that stretch reads YEKFTWVIKN…NNEVKIVAEV (127 aa). Positions 253 to 327 form a coiled coil; that stretch reads KVDWLERKLE…ALLEKEKGKV (75 aa).

The polypeptide is MATH domain and coiled-coil domain-containing protein At3g44800 (Arabidopsis thaliana (Mouse-ear cress)).